The primary structure comprises 261 residues: Ribosome-inactivating protein PD-L3/PD-L4 (261 aa).

The N-linked (GlcNAc...) asparagine; in PD-L3 glycan is linked to asparagine 10. Intrachain disulfides connect cysteine 34-cysteine 258 and cysteine 84-cysteine 105. The active site involves glutamate 175.

It belongs to the ribosome-inactivating protein family. Type 1 RIP subfamily.

It catalyses the reaction Endohydrolysis of the N-glycosidic bond at one specific adenosine on the 28S rRNA.. Inhibits protein synthesis. Does not cleave supercoiled pBR322 dsDNA. This chain is Ribosome-inactivating protein PD-L3/PD-L4, found in Phytolacca dioica (Bella sombra tree).